We begin with the raw amino-acid sequence, 212 residues long: Adenylate kinase (212 aa).

10–15 provides a ligand contact to ATP; the sequence is GAGKGT. An NMP region spans residues 30–59; it reads STGDMFRAAMANQTEMGVLAKSYIDKGELV. AMP is bound by residues Thr-31, Arg-36, 57 to 59, 86 to 89, and Gln-93; these read ELV and GYPR. The segment at 127 to 159 is LID; it reads GRIIHRVTGETFHKVFNPPVDYKEEDYYQREDD. Residues Arg-128 and 137–138 each bind ATP; that span reads TF. Positions 156 and 167 each coordinate AMP. ATP is bound at residue Gln-195.

Belongs to the adenylate kinase family. Monomer.

It localises to the cytoplasm. The enzyme catalyses AMP + ATP = 2 ADP. Its pathway is purine metabolism; AMP biosynthesis via salvage pathway; AMP from ADP: step 1/1. Catalyzes the reversible transfer of the terminal phosphate group between ATP and AMP. Plays an important role in cellular energy homeostasis and in adenine nucleotide metabolism. In Streptococcus pneumoniae (strain JJA), this protein is Adenylate kinase.